The sequence spans 439 residues: MTDIFEKCKRTHYSNEIGPELAGETVKVTGWVHEIRDLGGIVFVLIRDKNGITQLTAPSKKLSEEMMADVRAARKETIITLTGTVQESAKAPNGVEIIPSNIDVINVSQLPLPLDTTEKVEAEMDTRLDSRFMDLRKHDVSAIFKIKSQMLHTARNYFYDNDFTEITTPKLVASATEGGTELFPITYFEKEAFLGQSPQLYKQMMMATGLDNVFEIGQIFRAEEHDTLRHLNEALSIDAEMSFKSQTDAMNTLEELIKRILSDISTNCQKELSDLDHELDIPTEPFPIVTYEEVIDIVNSRDVEMNYGEDLNRAAEKVLGETMGSYYFITEWPTAIKPFYVMPNSDDAEKSTAFDLMYRDLELSSGAQRIHDYDLLYSQIEAKDLNPDSFEKYLQAFKYGMPPHSGWGMGADRLTMVITGAKNIRETVLFPRDRRRLTP.

E177 contacts L-aspartate. The tract at residues 199–202 (QLYK) is aspartate. L-aspartate is bound at residue R221. ATP-binding positions include 221-223 (RAE), 229-231 (RHL), and E362. Mg(2+)-binding residues include E362 and S365. S365 and R369 together coordinate L-aspartate. 410–413 (GADR) is a binding site for ATP.

The protein belongs to the class-II aminoacyl-tRNA synthetase family. Type 2 subfamily. In terms of assembly, homodimer. The cofactor is Mg(2+).

The protein localises to the cytoplasm. It carries out the reaction tRNA(Asx) + L-aspartate + ATP = L-aspartyl-tRNA(Asx) + AMP + diphosphate. Aspartyl-tRNA synthetase with relaxed tRNA specificity since it is able to aspartylate not only its cognate tRNA(Asp) but also tRNA(Asn). Reaction proceeds in two steps: L-aspartate is first activated by ATP to form Asp-AMP and then transferred to the acceptor end of tRNA(Asp/Asn). The protein is Aspartate--tRNA(Asp/Asn) ligase of Methanosphaera stadtmanae (strain ATCC 43021 / DSM 3091 / JCM 11832 / MCB-3).